The following is a 120-amino-acid chain: Ubiquitin domain-containing protein TINCR (120 aa).

In terms of domain architecture, Ubiquitin-like spans 14–83; it reads YHIKVHLADE…LQDGSVLLLV (70 aa).

In terms of tissue distribution, detected in stratum corneum (at protein level).

The protein is Ubiquitin domain-containing protein TINCR of Homo sapiens (Human).